A 189-amino-acid chain; its full sequence is HGPRTase-like protein 1 (189 aa).

Belongs to the purine/pyrimidine phosphoribosyltransferase family. Archaeal HPRT subfamily.

May catalyze a purine salvage reaction, the substrate is unknown. The protein is HGPRTase-like protein 1 of Natrialba magadii (strain ATCC 43099 / DSM 3394 / CCM 3739 / CIP 104546 / IAM 13178 / JCM 8861 / NBRC 102185 / NCIMB 2190 / MS3) (Natronobacterium magadii).